The primary structure comprises 330 residues: Mycothiol acetyltransferase (330 aa).

N-acetyltransferase domains lie at L5–R142 and V171–P328. A 1D-myo-inositol 2-(L-cysteinylamino)-2-deoxy-alpha-D-glucopyranoside-binding site is contributed by E36. Residue V80–V82 coordinates acetyl-CoA. Residues R142–P161 are disordered. Residues E198, K238, and E254 each coordinate 1D-myo-inositol 2-(L-cysteinylamino)-2-deoxy-alpha-D-glucopyranoside. Acetyl-CoA-binding positions include V258–V260 and Q265–R271. Y292 contributes to the 1D-myo-inositol 2-(L-cysteinylamino)-2-deoxy-alpha-D-glucopyranoside binding site. Position 297-302 (N297–R302) interacts with acetyl-CoA.

The protein belongs to the acetyltransferase family. MshD subfamily. In terms of assembly, monomer.

It catalyses the reaction 1D-myo-inositol 2-(L-cysteinylamino)-2-deoxy-alpha-D-glucopyranoside + acetyl-CoA = mycothiol + CoA + H(+). Its function is as follows. Catalyzes the transfer of acetyl from acetyl-CoA to desacetylmycothiol (Cys-GlcN-Ins) to form mycothiol. The polypeptide is Mycothiol acetyltransferase (Nocardiopsis dassonvillei (strain ATCC 23218 / DSM 43111 / CIP 107115 / JCM 7437 / KCTC 9190 / NBRC 14626 / NCTC 10488 / NRRL B-5397 / IMRU 509) (Actinomadura dassonvillei)).